The sequence spans 317 residues: Mitochondrial thiamine pyrophosphate carrier 1 (317 aa).

A run of 6 helical transmembrane segments spans residues 21-41, 86-106, 122-142, 176-196, 207-227, and 281-300; these read AVSG…ARSV, VPAS…YAWL, LAVG…LDLL, GGAW…GIYE, LPWL…AAVF, and GLTM…LWVY. 3 Solcar repeats span residues 22 to 109, 116 to 201, and 206 to 306; these read VSGL…LNTA, PPQA…CTIA, and GLPW…CLRL.

The protein belongs to the mitochondrial carrier (TC 2.A.29) family.

It localises to the mitochondrion inner membrane. Mitochondrial transporter that mediates uptake of thiamine pyrophosphate (ThPP) into mitochondria. The chain is Mitochondrial thiamine pyrophosphate carrier 1 (TPC1) from Eremothecium gossypii (strain ATCC 10895 / CBS 109.51 / FGSC 9923 / NRRL Y-1056) (Yeast).